The chain runs to 443 residues: Ribulose bisphosphate carboxylase large chain (443 aa).

2 residues coordinate substrate: asparagine 89 and threonine 139. The Proton acceptor role is filled by lysine 141. Lysine 143 contributes to the substrate binding site. 3 residues coordinate Mg(2+): lysine 167, aspartate 169, and glutamate 170. An N6-carboxylysine modification is found at lysine 167. Residue histidine 260 is the Proton acceptor of the active site. The substrate site is built by arginine 261, histidine 293, and serine 345.

It belongs to the RuBisCO large chain family. Type I subfamily. Heterohexadecamer of 8 large chains and 8 small chains; disulfide-linked. The disulfide link is formed within the large subunit homodimers. Mg(2+) serves as cofactor. In terms of processing, the disulfide bond which can form in the large chain dimeric partners within the hexadecamer appears to be associated with oxidative stress and protein turnover.

It localises to the plastid. It is found in the chloroplast. The enzyme catalyses 2 (2R)-3-phosphoglycerate + 2 H(+) = D-ribulose 1,5-bisphosphate + CO2 + H2O. It carries out the reaction D-ribulose 1,5-bisphosphate + O2 = 2-phosphoglycolate + (2R)-3-phosphoglycerate + 2 H(+). In terms of biological role, ruBisCO catalyzes two reactions: the carboxylation of D-ribulose 1,5-bisphosphate, the primary event in carbon dioxide fixation, as well as the oxidative fragmentation of the pentose substrate in the photorespiration process. Both reactions occur simultaneously and in competition at the same active site. This is Ribulose bisphosphate carboxylase large chain from Verbena bonariensis (Argentinian vervain).